Reading from the N-terminus, the 114-residue chain is Prostate stem cell antigen (114 aa).

Residues 1–11 (MAGLALQPGTA) form the signal peptide. In terms of domain architecture, UPAR/Ly6 spans 12-86 (LLCYSCKAQV…CCDTDLCNAS (75 aa)). 5 disulfide bridges follow: cysteine 14–cysteine 39, cysteine 17–cysteine 26, cysteine 32–cysteine 57, cysteine 61–cysteine 77, and cysteine 78–cysteine 83. The N-linked (GlcNAc...) asparagine glycan is linked to asparagine 31. Serine 86 carries GPI-anchor amidated serine lipidation. The propeptide at 86 to 114 (SGAHALQPAAAILALLPALGLLLWGPGQL) is removed in mature form.

Interacts with CHRNA4. N-glycosylated. As to expression, highly expressed in prostate (basal, secretory and neuroendocrine epithelium cells). Also found in bladder (transitional epithelium), placenta (trophoblasts), stomach (neuroendocrine cells), colon (neuroendocrine cells) and kidney (collecting ducts). Overexpressed in prostate cancers and expression is correlated with tumor stage, grade and androgen-independence. Highly expressed in prostate cancer bone metastases. Expressed in gastric epithelial cells, mainly in the isthmus (at protein level). Not detected in normal intestinal epithelium (at protein level). Expressed in brain cortex; expression is significantly increased in the front cortex of Alzheimer disease patients.

The protein resides in the cell membrane. Its function is as follows. May be involved in the regulation of cell proliferation. Has a cell-proliferation inhibition activity in vitro. Functionally, may act as a modulator of nicotinic acetylcholine receptors (nAChRs) activity. In vitro inhibits nicotine-induced signaling probably implicating alpha-3:beta-2- or alpha-7-containing nAChRs. The sequence is that of Prostate stem cell antigen (PSCA) from Homo sapiens (Human).